Here is a 684-residue protein sequence, read N- to C-terminus: U4/U6 small nuclear ribonucleoprotein Prp3 (684 aa).

One can recognise a PWI domain in the interval 1–87 (MSLSKRELDE…HSKSNSDRNR (87 aa)). Residues 73-107 (GRSSRHSKSNSDRNRKRELKDVFGDDSEVSKESSG) show a composition bias toward basic and acidic residues. 2 disordered regions span residues 73–109 (GRSS…SGVK) and 162–183 (FISP…RLPI). Polar residues predominate over residues 170–183 (PKISSSSQSERLPI).

In terms of assembly, component of the precatalytic spliceosome (spliceosome B complex). Component of the U4/U6-U5 tri-snRNP complex, a building block of the precatalytic spliceosome (spliceosome B complex). The U4/U6-U5 tri-snRNP complex is composed of the U4, U6 and U5 snRNAs and at least PRPF3, PRPF4, PRPF6, PRPF8, PRPF31, SNRNP200, TXNL4A, SNRNP40, SNRPB, SNRPD1, SNRPD2, SNRPD3, SNRPE, SNRPF, SNRPG, DDX23, CD2BP2, PPIH, SNU13, EFTUD2, SART1 and USP39, plus LSM2, LSM3, LSM4, LSM5, LSM6, LSM7 and LSM8.

Its subcellular location is the nucleus. The protein resides in the nucleus speckle. In terms of biological role, plays a role in pre-mRNA splicing as component of the U4/U6-U5 tri-snRNP complex that is involved in spliceosome assembly, and as component of the precatalytic spliceosome (spliceosome B complex). The chain is U4/U6 small nuclear ribonucleoprotein Prp3 (PRPF3) from Gallus gallus (Chicken).